Reading from the N-terminus, the 1092-residue chain is Leukemia inhibitory factor receptor (1092 aa).

An N-terminal signal peptide occupies residues 1 to 43 (MAAYSWWRQPSWMVDNKRSRMTPNLPWLLSALTLLHLTMHANG). Topologically, residues 44-828 (LKRGVQDLKC…SMFVVTKENS (785 aa)) are extracellular. Positions 45-126 (KRGVQDLKCT…QSKFTLNEKD (82 aa)) constitute a Fibronectin type-III 1 domain. Cystine bridges form between cysteine 53/cysteine 63 and cysteine 80/cysteine 88. N-linked (GlcNAc...) asparagine glycosylation is found at asparagine 164, asparagine 199, asparagine 238, and asparagine 261. 2 disulfide bridges follow: cysteine 208/cysteine 265 and cysteine 336/cysteine 346. Fibronectin type-III domains follow at residues 330-429 (VPQK…VAPH), 430-529 (DPTS…TEAT), 533-624 (GPDT…IPND), 622-714 (PNDD…IGYV), and 719-828 (PIVA…KENS). N-linked (GlcNAc...) asparagine glycans are attached at residues asparagine 385, asparagine 402, asparagine 421, asparagine 440, asparagine 453, and asparagine 476. An intrachain disulfide couples cysteine 461 to cysteine 506. Residues 514–518 (WSRWS) carry the WSXWS motif motif. Asparagine 567, asparagine 647, asparagine 658, asparagine 675, asparagine 724, and asparagine 782 each carry an N-linked (GlcNAc...) asparagine glycan. A helical transmembrane segment spans residues 829–853 (VGLIIAILIPVAVAVIVGVVTSILC). Topologically, residues 854 to 1092 (YRKREWIKET…TNFFQNKPND (239 aa)) are cytoplasmic. A Box 1 motif motif is present at residues 864–872 (FYPDIPNPE). Serine 922 and serine 1039 each carry phosphoserine. The tract at residues 1009 to 1092 (EDTAAEDEEG…TNFFQNKPND (84 aa)) is disordered. Composition is skewed to polar residues over residues 1027–1062 (ANVNTWNLVSPDSPRSTDSNNEVVSFGSPCSINSRQ) and 1081–1092 (SFTNFFQNKPND).

This sequence belongs to the type I cytokine receptor family. Type 2 subfamily. Heterodimer composed of LIFR and IL6ST. The heterodimer formed by LIFR and IL6ST interacts with the complex formed by CNTF and CNTFR. In terms of tissue distribution, placenta, liver, kidney, heart, lung, brain, and embryos. The liver may be the primary site of synthesis of the secreted form.

Its subcellular location is the cell membrane. It is found in the secreted. In terms of biological role, signal-transducing molecule. May have a common pathway with IL6ST. The soluble form inhibits the biological activity of LIF by blocking its binding to receptors on target cells. This chain is Leukemia inhibitory factor receptor (Lifr), found in Mus musculus (Mouse).